Here is a 138-residue protein sequence, read N- to C-terminus: Large ribosomal subunit protein uL16 (138 aa).

Positions 1–15 (MLSPRKVKYRKKQRG) are enriched in basic residues. A disordered region spans residues 1 to 21 (MLSPRKVKYRKKQRGRLSGEA).

This sequence belongs to the universal ribosomal protein uL16 family. Part of the 50S ribosomal subunit.

Binds 23S rRNA and is also seen to make contacts with the A and possibly P site tRNAs. In Borrelia duttonii (strain Ly), this protein is Large ribosomal subunit protein uL16.